A 153-amino-acid polypeptide reads, in one-letter code: Lipoprotein signal peptidase (153 aa).

Transmembrane regions (helical) follow at residues 52-72 and 81-101; these read ILAG…IGIV and GQML…GNFI. Residues D111 and D129 contribute to the active site. The helical transmembrane segment at 124-144 threads the bilayer; it reads IFNIADSSLCVGVILLFIHML.

The protein belongs to the peptidase A8 family.

It localises to the cell membrane. The enzyme catalyses Release of signal peptides from bacterial membrane prolipoproteins. Hydrolyzes -Xaa-Yaa-Zaa-|-(S,diacylglyceryl)Cys-, in which Xaa is hydrophobic (preferably Leu), and Yaa (Ala or Ser) and Zaa (Gly or Ala) have small, neutral side chains.. It participates in protein modification; lipoprotein biosynthesis (signal peptide cleavage). Its function is as follows. This protein specifically catalyzes the removal of signal peptides from prolipoproteins. In Bacillus velezensis (strain DSM 23117 / BGSC 10A6 / LMG 26770 / FZB42) (Bacillus amyloliquefaciens subsp. plantarum), this protein is Lipoprotein signal peptidase.